The chain runs to 335 residues: Beta-hexosaminidase (335 aa).

Substrate contacts are provided by residues D60, R68, R133, and 163-164 (KH). The active-site Proton donor/acceptor is the H176. D247 serves as the catalytic Nucleophile.

It belongs to the glycosyl hydrolase 3 family. NagZ subfamily.

It localises to the cytoplasm. The enzyme catalyses Hydrolysis of terminal non-reducing N-acetyl-D-hexosamine residues in N-acetyl-beta-D-hexosaminides.. Its pathway is cell wall biogenesis; peptidoglycan recycling. Its function is as follows. Plays a role in peptidoglycan recycling by cleaving the terminal beta-1,4-linked N-acetylglucosamine (GlcNAc) from peptide-linked peptidoglycan fragments, giving rise to free GlcNAc, anhydro-N-acetylmuramic acid and anhydro-N-acetylmuramic acid-linked peptides. In Xylella fastidiosa (strain M23), this protein is Beta-hexosaminidase.